Reading from the N-terminus, the 310-residue chain is tRNA uridine(34) hydroxylase (310 aa).

The region spanning 134-232 (DDPDTLLIDT…YFEEVSQSES (99 aa)) is the Rhodanese domain. The active-site Cysteine persulfide intermediate is the C192.

This sequence belongs to the TrhO family.

The catalysed reaction is uridine(34) in tRNA + AH2 + O2 = 5-hydroxyuridine(34) in tRNA + A + H2O. Functionally, catalyzes oxygen-dependent 5-hydroxyuridine (ho5U) modification at position 34 in tRNAs. The protein is tRNA uridine(34) hydroxylase of Prochlorococcus marinus (strain MIT 9303).